The chain runs to 256 residues: Imidazole glycerol phosphate synthase subunit HisF (256 aa).

Residues D12 and D131 contribute to the active site.

This sequence belongs to the HisA/HisF family. As to quaternary structure, heterodimer of HisH and HisF.

It is found in the cytoplasm. The catalysed reaction is 5-[(5-phospho-1-deoxy-D-ribulos-1-ylimino)methylamino]-1-(5-phospho-beta-D-ribosyl)imidazole-4-carboxamide + L-glutamine = D-erythro-1-(imidazol-4-yl)glycerol 3-phosphate + 5-amino-1-(5-phospho-beta-D-ribosyl)imidazole-4-carboxamide + L-glutamate + H(+). It functions in the pathway amino-acid biosynthesis; L-histidine biosynthesis; L-histidine from 5-phospho-alpha-D-ribose 1-diphosphate: step 5/9. IGPS catalyzes the conversion of PRFAR and glutamine to IGP, AICAR and glutamate. The HisF subunit catalyzes the cyclization activity that produces IGP and AICAR from PRFAR using the ammonia provided by the HisH subunit. This is Imidazole glycerol phosphate synthase subunit HisF from Stutzerimonas stutzeri (strain A1501) (Pseudomonas stutzeri).